The chain runs to 171 residues: MSALTRFAQSRLAWTLLLLTAVGLEACALFFQHVMKLDPCVMCIYQRLAVLGVLTAGLIGVVGHQFRLLRFLGVLLWGVSAAWGLKLALELVEMQTNPSPFSTCSFLPEFPEWMPLHEWFPSVFLPTGMCTDIPWEMFGITMSQWMVVAFSTYLIALVVFIVPALMPTKKA.

Topologically, residues 1–13 (MSALTRFAQSRLA) are cytoplasmic. Residues 14–30 (WTLLLLTAVGLEACALF) traverse the membrane as a helical segment. Residues 31–48 (FQHVMKLDPCVMCIYQRL) lie on the Periplasmic side of the membrane. Cys-40 and Cys-43 form a disulfide bridge. Residues 49-64 (AVLGVLTAGLIGVVGH) form a helical membrane-spanning segment. Residues 65–71 (QFRLLRF) lie on the Cytoplasmic side of the membrane. Residues 72-89 (LGVLLWGVSAAWGLKLAL) traverse the membrane as a helical segment. Topologically, residues 90 to 144 (ELVEMQTNPSPFSTCSFLPEFPEWMPLHEWFPSVFLPTGMCTDIPWEMFGITMSQ) are periplasmic. Cys-104 and Cys-130 are joined by a disulfide. The chain crosses the membrane as a helical span at residues 145–163 (WMVVAFSTYLIALVVFIVP). At 164 to 171 (ALMPTKKA) the chain is on the cytoplasmic side.

This sequence belongs to the DsbB family.

The protein resides in the cell inner membrane. In terms of biological role, required for disulfide bond formation in some periplasmic proteins. Acts by oxidizing the DsbA protein. This chain is Disulfide bond formation protein B, found in Shewanella loihica (strain ATCC BAA-1088 / PV-4).